We begin with the raw amino-acid sequence, 147 residues long: Nitric oxide reductase subunit C (147 aa).

Residues Val-13 to Thr-29 traverse the membrane as a helical; Signal-anchor segment. Residues Cys-59, Cys-62, and His-63 each coordinate heme c.

In terms of assembly, heterodimer of cytochromes b (large subunit) and c (small subunit).

Its subcellular location is the cell membrane. Functionally, component of the anaerobic respiratory chain that transforms nitrate to dinitrogen (denitrification). This is Nitric oxide reductase subunit C (norC) from Cereibacter sphaeroides (strain ATCC 17025 / ATH 2.4.3) (Rhodobacter sphaeroides).